The chain runs to 415 residues: Beta-1,4-glucuronyltransferase 1 (415 aa).

The Cytoplasmic segment spans residues 1-8; the sequence is MQMSYAIR. Residues 9–36 form a helical; Signal-anchor for type II membrane protein membrane-spanning segment; that stretch reads CAFYQLLLAALMLVAMLQLLYLSLLSGL. The Lumenal segment spans residues 37 to 415; the sequence is HGQEEQDQYF…AKYPDSPRHC (379 aa). Asn204 carries N-linked (GlcNAc...) asparagine glycosylation. The Mn(2+) site is built by Asp227 and Asp229. Asn300 carries an N-linked (GlcNAc...) asparagine glycan.

It belongs to the glycosyltransferase 49 family. As to quaternary structure, interacts with LARGE1 and LARGE2. Mn(2+) is required as a cofactor.

It localises to the golgi apparatus membrane. It carries out the reaction 3-O-[beta-D-Xyl-(1-&gt;4)-Rib-ol-P-Rib-ol-P-3-beta-D-GalNAc-(1-&gt;3)-beta-D-GlcNAc-(1-&gt;4)-(O-6-P-alpha-D-Man)]-Thr-[protein] + UDP-alpha-D-glucuronate = 3-O-[beta-D-GlcA-(1-&gt;3)-beta-D-Xyl-(1-&gt;4)-Rib-ol-P-Rib-ol-P-3-beta-D-GalNAc-(1-&gt;3)-beta-D-GlcNAc-(1-&gt;4)-(O-6-P-alpha-D-Man)]-Thr-[protein] + UDP + H(+). The protein operates within protein modification; protein glycosylation. Its function is as follows. Beta-1,4-glucuronyltransferase involved in O-mannosylation of alpha-dystroglycan (DAG1). Transfers a glucuronic acid (GlcA) residue onto a xylose (Xyl) acceptor to produce the glucuronyl-beta-1,4-xylose-beta disaccharide primer, which is further elongated by LARGE1, during synthesis of phosphorylated O-mannosyl glycan. Phosphorylated O-mannosyl glycan is a carbohydrate structure present in alpha-dystroglycan (DAG1), which is required for binding laminin G-like domain-containing extracellular proteins with high affinity. Required for axon guidance; via its function in O-mannosylation of alpha-dystroglycan (DAG1). The protein is Beta-1,4-glucuronyltransferase 1 of Bos taurus (Bovine).